A 408-amino-acid chain; its full sequence is S-adenosylmethionine synthase (408 aa).

An ATP-binding site is contributed by Gly-140–Asp-145.

This sequence belongs to the AdoMet synthase 2 family. It depends on Mg(2+) as a cofactor.

The catalysed reaction is L-methionine + ATP + H2O = S-adenosyl-L-methionine + phosphate + diphosphate. Its pathway is amino-acid biosynthesis; S-adenosyl-L-methionine biosynthesis; S-adenosyl-L-methionine from L-methionine: step 1/1. Functionally, catalyzes the formation of S-adenosylmethionine from methionine and ATP. The protein is S-adenosylmethionine synthase of Caldivirga maquilingensis (strain ATCC 700844 / DSM 13496 / JCM 10307 / IC-167).